The following is a 117-amino-acid chain: Nuclear transition protein 2 (117 aa).

A disordered region spans residues 1–117 (MDTKMQSLPT…KRRSSGRRYK (117 aa)). Positions 7 to 26 (SLPTTHPHPHSSSRPQSHTS) are enriched in low complexity. Zn(2+) is bound by residues His-12, His-14, His-16, His-24, Cys-32, Cys-34, Cys-38, and Cys-41. Low complexity predominate over residues 44-53 (AGHAGSSSSP). Basic residues-rich tracts occupy residues 60 to 77 (KHPK…RPSH) and 93 to 117 (SKRK…RRYK). The short motif at 90 to 98 (GKVSKRKAV) is the Nuclear localization signal element. Ser-112 carries the post-translational modification Phosphoserine.

This sequence belongs to the nuclear transition protein 2 family.

Its subcellular location is the nucleus. The protein localises to the chromosome. Plays a key role in the replacement of histones to protamine in the elongating spermatids of mammals. In condensing spermatids, loaded onto the nucleosomes, where it promotes the recruitment and processing of protamines, which are responsible for histone eviction. The histone H2AB1-H2BC1/TH2B dimer is required for loading of TNP2 onto chromatin. This is Nuclear transition protein 2 from Mus musculus (Mouse).